A 613-amino-acid chain; its full sequence is WD40 repeat-containing protein HOS15 (613 aa).

Positions 5 to 37 (TSVELNFLVFRYLQESGFTHAAFTLGYEAGINK) constitute a LisH domain. 2 disordered regions span residues 101–174 (KKRK…REKM) and 193–214 (EIER…KQLG). 8 WD repeats span residues 263–302 (GHTS…FKAV), 322–362 (EKSK…STLS), 363–402 (KHKG…WKQQ), 405–443 (FHSG…PAKT), 446–485 (GHQG…FVHD), 488–536 (EHTK…MLCS), 539–580 (GHRE…KTYT), and 582–613 (NGGI…DFRM).

It is found in the nucleus. In terms of biological role, acts as a repressor of cold stress-regulated gene expression. Interacts specifically with and promotes deacetylation of histone H4. Plays a role in gene regulation for plant acclimation and tolerance to cold stress. This Arabidopsis thaliana (Mouse-ear cress) protein is WD40 repeat-containing protein HOS15.